Reading from the N-terminus, the 779-residue chain is Beta-galactosidase 15 (779 aa).

Residues 1–19 (MVSLSFILCCVLVSSCAYA) form the signal peptide. Asn148 carries N-linked (GlcNAc...) asparagine glycosylation. Residue Glu178 is the Proton donor of the active site. The active-site Nucleophile is the Glu247. Asn248, Asn345, Asn374, Asn489, Asn495, and Asn555 each carry an N-linked (GlcNAc...) asparagine glycan. Residues 694–779 (VYEKNVLELS…AKRLAVEAIC (86 aa)) form the SUEL-type lectin domain.

This sequence belongs to the glycosyl hydrolase 35 family. In terms of tissue distribution, ubiquitous, with higher levels in roots and siliques.

Its subcellular location is the secreted. It localises to the extracellular space. The protein localises to the apoplast. The enzyme catalyses Hydrolysis of terminal non-reducing beta-D-galactose residues in beta-D-galactosides.. The polypeptide is Beta-galactosidase 15 (BGAL15) (Arabidopsis thaliana (Mouse-ear cress)).